The following is a 508-amino-acid chain: Photosystem II CP47 reaction center protein (508 aa).

6 helical membrane-spanning segments follow: residues S21–S36, I101–W115, G140–F156, I203–S218, V237–V252, and S457–R472.

Belongs to the PsbB/PsbC family. PsbB subfamily. In terms of assembly, PSII is composed of 1 copy each of membrane proteins PsbA, PsbB, PsbC, PsbD, PsbE, PsbF, PsbH, PsbI, PsbJ, PsbK, PsbL, PsbM, PsbT, PsbX, PsbY, PsbZ, Psb30/Ycf12, at least 3 peripheral proteins of the oxygen-evolving complex and a large number of cofactors. It forms dimeric complexes. Requires Binds multiple chlorophylls. PSII binds additional chlorophylls, carotenoids and specific lipids. as cofactor.

It localises to the plastid. It is found in the chloroplast thylakoid membrane. Its function is as follows. One of the components of the core complex of photosystem II (PSII). It binds chlorophyll and helps catalyze the primary light-induced photochemical processes of PSII. PSII is a light-driven water:plastoquinone oxidoreductase, using light energy to abstract electrons from H(2)O, generating O(2) and a proton gradient subsequently used for ATP formation. This chain is Photosystem II CP47 reaction center protein, found in Panax ginseng (Korean ginseng).